Here is a 377-residue protein sequence, read N- to C-terminus: Homoserine O-succinyltransferase (377 aa).

One can recognise an AB hydrolase-1 domain in the interval 50-358; the sequence is NAILVCHALS…PSTYGHDSFL (309 aa). Ser156 acts as the Nucleophile in catalysis. Position 226 (Arg226) interacts with substrate. Residues Asp321 and His354 contribute to the active site. Residue Asp355 participates in substrate binding.

It belongs to the AB hydrolase superfamily. MetX family. Homodimer.

The protein resides in the cytoplasm. The catalysed reaction is L-homoserine + succinyl-CoA = O-succinyl-L-homoserine + CoA. It functions in the pathway amino-acid biosynthesis; L-methionine biosynthesis via de novo pathway; O-succinyl-L-homoserine from L-homoserine: step 1/1. Its function is as follows. Transfers a succinyl group from succinyl-CoA to L-homoserine, forming succinyl-L-homoserine. In Nitrosomonas eutropha (strain DSM 101675 / C91 / Nm57), this protein is Homoserine O-succinyltransferase.